The chain runs to 672 residues: Negative growth regulatory protein NGR1 (672 aa).

Position 1 is an N-acetylmethionine (M1). Polar residues-rich tracts occupy residues 1 to 13 and 23 to 32; these read MMSN…QRQE and SSTVETSTEP. Disordered regions lie at residues 1–40 and 77–102; these read MMSN…WMGD and SSTS…NSTD. M2 is modified (N-acetylserine). RRM domains lie at 36–159, 192–271, and 360–432; these read LWMG…YSPT, FSLF…YATP, and TTVF…WGRP. The span at 77–96 shows a compositional bias: low complexity; it reads SSTSSSNNNTSEENAENQQS. Phosphoserine is present on S524. The segment at 640-672 is disordered; the sequence is LNIAPNSNNSKSSIMNKHPNRNNVPPIHPSLLH. Over residues 645 to 656 the composition is skewed to low complexity; that stretch reads NSNNSKSSIMNK.

In terms of biological role, may be an RNA-binding protein involved in control of an RNA processing pathway that influences the regulation of cell growth in early log phase. Can bind to RNA and single-stranded DNA but not double-stranded DNA. This Saccharomyces cerevisiae (strain ATCC 204508 / S288c) (Baker's yeast) protein is Negative growth regulatory protein NGR1 (NGR1).